Reading from the N-terminus, the 100-residue chain is Small ribosomal subunit protein uS14c (100 aa).

The protein belongs to the universal ribosomal protein uS14 family. Part of the 30S ribosomal subunit.

It is found in the plastid. It localises to the chloroplast. Its function is as follows. Binds 16S rRNA, required for the assembly of 30S particles. The protein is Small ribosomal subunit protein uS14c of Capsella bursa-pastoris (Shepherd's purse).